Reading from the N-terminus, the 1035-residue chain is Retinoblastoma-related protein (1035 aa).

Residues 403-426 (ITSPLSPHRSPASHANGIPGSANS) form a disordered region. Residues 431–632 (TPVSTAMTTA…EKGSSLYNSL (202 aa)) are domain A. The segment at 431 to 885 (TPVSTAMTTA…NEIFIPAAKP (455 aa)) is pocket. Residues 633–753 (TVARPALSAE…PGGGGETCAE (121 aa)) form a spacer region. Disordered stretches follow at residues 674–697 (PSLQ…PKRP) and 721–748 (GNLK…GGGG). Residues 754 to 885 (TGINVFFTKI…NEIFIPAAKP (132 aa)) form a domain B region.

The protein belongs to the retinoblastoma protein (RB) family.

It is found in the nucleus. Its function is as follows. Regulator of biological processes that recruits a histone deacetylase to control gene transcription. May play a role in the entry into mitosis, negatively regulating the cell proliferation. Formation of stable complexes with geminiviridae replication-associated proteins may create a cellular environment which favors viral DNA replication. This Populus trichocarpa (Western balsam poplar) protein is Retinoblastoma-related protein (RBL901).